The sequence spans 68 residues: Large ribosomal subunit protein bL35 (68 aa).

It belongs to the bacterial ribosomal protein bL35 family.

This Rickettsia typhi (strain ATCC VR-144 / Wilmington) protein is Large ribosomal subunit protein bL35.